The sequence spans 554 residues: Glutamine--tRNA ligase (554 aa).

The 'HIGH' region signature appears at 34-44; the sequence is PEPNGYLHIGH. ATP contacts are provided by residues 35-37 and 41-47; these read EPN and HIGHAKS. 2 residues coordinate L-glutamine: Asp67 and Tyr212. Residues Thr231, 261 to 262, and 269 to 271 each bind ATP; these read RL and MSK. A 'KMSKS' region motif is present at residues 268–272; that stretch reads VMSKR. Residues 317–324 form an interaction with tRNA region; it reads TKQDNTIE.

It belongs to the class-I aminoacyl-tRNA synthetase family. Monomer.

Its subcellular location is the cytoplasm. The catalysed reaction is tRNA(Gln) + L-glutamine + ATP = L-glutaminyl-tRNA(Gln) + AMP + diphosphate. This chain is Glutamine--tRNA ligase, found in Shigella flexneri serotype 5b (strain 8401).